The sequence spans 289 residues: Probable WRKY transcription factor 38 (289 aa).

The segment at 62–103 is disordered; it reads PETEDDQFSDLSSRDSSPPPQGSPSKKRKIDSTNSSENWRDD. A DNA-binding region (WRKY) is located at residues 104 to 172; it reads SPDPIYYDGY…YFGHHTCKTE (69 aa). Over residues 249–266 the composition is skewed to low complexity; that stretch reads LSSPSGSYPPSSSSGSES. Positions 249–278 are disordered; it reads LSSPSGSYPPSSSSGSESADFNSDLLFDNP.

Belongs to the WRKY group III family.

It localises to the nucleus. Its function is as follows. Transcription factor. Interacts specifically with the W box (5'-(T)TGAC[CT]-3'), a frequently occurring elicitor-responsive cis-acting element. The polypeptide is Probable WRKY transcription factor 38 (WRKY38) (Arabidopsis thaliana (Mouse-ear cress)).